Reading from the N-terminus, the 146-residue chain is Acidic phospholipase A2 S8-51 (146 aa).

The N-terminal stretch at 1 to 19 (MYPAHLLVLLAVCVSLLGA) is a signal peptide. Positions 20 to 27 (ASIPPQPL) are excised as a propeptide. Intrachain disulfides connect Cys38/Cys98, Cys54/Cys145, Cys56/Cys72, Cys71/Cys126, Cys78/Cys119, Cys87/Cys112, and Cys105/Cys117. Tyr55, Gly57, and Gly59 together coordinate Ca(2+). His75 is an active-site residue. Position 76 (Asp76) interacts with Ca(2+). Asp120 is a catalytic residue.

Belongs to the phospholipase A2 family. Group I subfamily. D49 sub-subfamily. Requires Ca(2+) as cofactor. In terms of tissue distribution, expressed by the venom gland.

The protein resides in the secreted. The enzyme catalyses a 1,2-diacyl-sn-glycero-3-phosphocholine + H2O = a 1-acyl-sn-glycero-3-phosphocholine + a fatty acid + H(+). Functionally, snake venom phospholipase A2 (PLA2) that inhibits collagen-induced platelet aggregation. PLA2 catalyzes the calcium-dependent hydrolysis of the 2-acyl groups in 3-sn-phosphoglycerides. This is Acidic phospholipase A2 S8-51 from Austrelaps superbus (Lowland copperhead snake).